We begin with the raw amino-acid sequence, 476 residues long: MVTAAASTSQVVGDSDFVVADITLADFGRKELAIAEKEMPGLMSLRDKYGQEKPLQGARIAGSLHMTIQTGVLIETLVALGAQVRWASCNIFSTQDHAAAAIAKAGVPVFAKKGETLSEYWSFTHSILEWSGEQGPNMILDDGGDATGLVILGSKAEKDISVLDNPSNEEEIALYASIKSKLSTDKSFYSRIKKIILGVTEETTTGVARLYQMQKNGELPFPAINVNDSVTKSKFDNLYGCRESLVDGIKRATDVMVAGKVALVIGYGDVGKGSAQSLRGLGATVMIAEIDPICALQAAMEGYRVVRLDDVVEEIDIFVTATGNFQVICHDHLIRMKDEAIVSNIGHFDNEIDVASLKSYQWENIKPQVDHITLPSGNKIILLAEGRLVNLGCATGHPSFVMSNSFTNQVLAQIELFKKGDSYQNNVYVLPKHLDEMVARLHLDKIGANLTELSKEQADYINVPIEGPYKSEQYRY.

Positions 67, 142, and 202 each coordinate substrate. 203–205 (TTT) contacts NAD(+). Substrate is bound by residues Lys232 and Asp236. Residues Asn237, 266-271 (GYGDVG), Glu289, Asn324, 345-347 (IGH), and Asn390 each bind NAD(+).

Belongs to the adenosylhomocysteinase family. NAD(+) serves as cofactor.

The protein resides in the cytoplasm. It catalyses the reaction S-adenosyl-L-homocysteine + H2O = L-homocysteine + adenosine. Its pathway is amino-acid biosynthesis; L-homocysteine biosynthesis; L-homocysteine from S-adenosyl-L-homocysteine: step 1/1. In terms of biological role, may play a key role in the regulation of the intracellular concentration of adenosylhomocysteine. This chain is Adenosylhomocysteinase, found in Prochlorococcus marinus (strain SARG / CCMP1375 / SS120).